A 134-amino-acid chain; its full sequence is Small ribosomal subunit protein uS9 (134 aa).

Residues 114–134 form a disordered region; sequence EVERKKYGLKKARRAPQFSKR. Positions 120-134 are enriched in basic residues; it reads YGLKKARRAPQFSKR.

It belongs to the universal ribosomal protein uS9 family.

The protein is Small ribosomal subunit protein uS9 of Thermotoga sp. (strain RQ2).